The following is a 347-amino-acid chain: MPTPLTLADFDYHLPPELIAQSPAAERGGSRLLHLDAASRLHDRRFPDLAGLLRPHDLLVFNDTRVIKARLTGQKATGGKVEVLVERITAPDRALAHVRASKSPGPGMRLRLAEAFEAEVLGREGELFDLRFPAPVLDLLDAHGATPLPPYITHAADATDERRYQTVYAREPGAVAAPTAGLHFDQPMLEQLAAQGVQRAFVTLHVGAGTFQPVRVQNLAEHIMHAEWYTVPEATVAAIARARAHGGRIVAVGTTSVRALESAAAQAQDGPLAAAQGDTRLFITPGYRYRIVDALLTNFHLPQSTLLMLVSALAGVAPIRRAYAHAVAERYRFFSYGDAMFIETPAP.

Belongs to the QueA family. In terms of assembly, monomer.

It is found in the cytoplasm. The catalysed reaction is 7-aminomethyl-7-carbaguanosine(34) in tRNA + S-adenosyl-L-methionine = epoxyqueuosine(34) in tRNA + adenine + L-methionine + 2 H(+). It participates in tRNA modification; tRNA-queuosine biosynthesis. Functionally, transfers and isomerizes the ribose moiety from AdoMet to the 7-aminomethyl group of 7-deazaguanine (preQ1-tRNA) to give epoxyqueuosine (oQ-tRNA). In Bordetella parapertussis (strain 12822 / ATCC BAA-587 / NCTC 13253), this protein is S-adenosylmethionine:tRNA ribosyltransferase-isomerase.